The following is a 127-amino-acid chain: Modulator protein MzrA (127 aa).

The Cytoplasmic portion of the chain corresponds to 1–10 (MQIPRMSLRQ). A helical membrane pass occupies residues 11-31 (LAWSGAVLLLVGTLLLAWSAV). Residues 32–127 (RQQESTLAIR…RLRDNSHRFG (96 aa)) are Periplasmic-facing.

It belongs to the MzrA family. As to quaternary structure, interacts with EnvZ.

Its subcellular location is the cell inner membrane. In terms of biological role, modulates the activity of the EnvZ/OmpR two-component regulatory system, probably by directly modulating EnvZ enzymatic activity and increasing stability of phosphorylated OmpR. Links the two-component systems CpxA/CpxR and EnvZ/OmpR. The chain is Modulator protein MzrA from Escherichia coli (strain K12).